Consider the following 244-residue polypeptide: WUSCHEL-related homeobox 3 (244 aa).

The homeobox; WUS-type DNA-binding region spans 4–68 (VASTRWCPTP…NHKARDRQKL (65 aa)).

Belongs to the WUS homeobox family. As to expression, expressed in aerial parts of seedlings, inflorescences and flowers at low level. Expressed in a restricted number of L1 cells at the lateral regions of flower primordia.

It localises to the nucleus. Functionally, probable transcription factor required to initiate organ founder cells in a lateral domain of shoot meristems. Involved in the lateral sepal axis-dependent development of flowers, probably by regulating the proliferation of L1 cells at the lateral region of flower primordia. Required for the formation of the margin cells of the first and second whorl organs. This chain is WUSCHEL-related homeobox 3 (WOX3), found in Arabidopsis thaliana (Mouse-ear cress).